The chain runs to 365 residues: Cobalt-precorrin-5B C(1)-methyltransferase (365 aa).

The protein belongs to the CbiD family.

It carries out the reaction Co-precorrin-5B + S-adenosyl-L-methionine = Co-precorrin-6A + S-adenosyl-L-homocysteine. Its pathway is cofactor biosynthesis; adenosylcobalamin biosynthesis; cob(II)yrinate a,c-diamide from sirohydrochlorin (anaerobic route): step 6/10. In terms of biological role, catalyzes the methylation of C-1 in cobalt-precorrin-5B to form cobalt-precorrin-6A. This chain is Cobalt-precorrin-5B C(1)-methyltransferase, found in Methanococcus maripaludis (strain C6 / ATCC BAA-1332).